The chain runs to 955 residues: Villin-5 (955 aa).

4 Gelsolin-like repeats span residues 29–111 (FKPV…DKFL), 152–218 (VHVK…VEDG), 274–339 (LLHE…TVMF), and 644–712 (HFTQ…GSEP). Disordered stretches follow at residues 741 to 783 (KGGG…RVRV) and 801 to 895 (NSRN…GLPV). Over residues 756–776 (PTYSGRSTVQDKSQRSRSMSF) the composition is skewed to polar residues. The span at 817–836 (PKSATPDSSSAPSKSSATAS) shows a compositional bias: low complexity. Residues 842–864 (DRPKSVKDGSELEKPKQEEDAKE) are compositionally biased toward basic and acidic residues. The span at 867-878 (NTMTSRVESLTI) shows a compositional bias: polar residues. Residues 890–955 (DEGLPVYPYD…NRMKIALQLF (66 aa)) form the HP domain.

The protein belongs to the villin/gelsolin family.

It localises to the cytoplasm. The protein resides in the cytoskeleton. Functionally, ca(2+)-regulated actin-binding protein. Binds actin microfilaments (MFs). Involved in actin filament bundling, severing and capping. Caps the barbed end of actin filaments and is able to sever them in a calcium-dependent manner. The sequence is that of Villin-5 from Oryza sativa subsp. japonica (Rice).